We begin with the raw amino-acid sequence, 256 residues long: 3-methyl-2-oxobutanoate hydroxymethyltransferase (256 aa).

Positions 42 and 86 each coordinate Mg(2+). Residues 42-43 (DS), Asp86, and Lys116 contribute to the 3-methyl-2-oxobutanoate site. Mg(2+) is bound at residue Glu118. Catalysis depends on Glu185, which acts as the Proton acceptor.

The protein belongs to the PanB family. Homodecamer; pentamer of dimers. It depends on Mg(2+) as a cofactor.

Its subcellular location is the cytoplasm. The enzyme catalyses 3-methyl-2-oxobutanoate + (6R)-5,10-methylene-5,6,7,8-tetrahydrofolate + H2O = 2-dehydropantoate + (6S)-5,6,7,8-tetrahydrofolate. Its pathway is cofactor biosynthesis; (R)-pantothenate biosynthesis; (R)-pantoate from 3-methyl-2-oxobutanoate: step 1/2. Its function is as follows. Catalyzes the reversible reaction in which hydroxymethyl group from 5,10-methylenetetrahydrofolate is transferred onto alpha-ketoisovalerate to form ketopantoate. This is 3-methyl-2-oxobutanoate hydroxymethyltransferase from Prochlorococcus marinus (strain SARG / CCMP1375 / SS120).